A 173-amino-acid polypeptide reads, in one-letter code: Disulfide bond formation protein B (173 aa).

Residues 1–16 (MRILSSLKTFSQSRLS) are Cytoplasmic-facing. The chain crosses the membrane as a helical span at residues 17-33 (WLLLLAFVVFFTLCAMY). Over 34-51 (FQHVMLLAPCVMCIYERI) the chain is Periplasmic. Cysteine 43 and cysteine 46 are oxidised to a cystine. The helical transmembrane segment at 52–67 (AMLGIGVAALIGAIAP) threads the bilayer. The Cytoplasmic portion of the chain corresponds to 68 to 74 (QNPVVRW). The helical transmembrane segment at 75–92 (LGFAAWGASSYKGLMLAI) threads the bilayer. The Periplasmic segment spans residues 93-147 (EHVNYQFNPSPFATCDLFVTFPAWAPLNQWAPNLFEAYGDCSKVVWQFLTLSMPQ). Cysteine 107 and cysteine 133 are disulfide-bonded. Residues 148 to 166 (WLVVIFAANLLALAIFVVA) form a helical membrane-spanning segment. Residues 167–173 (QLAKTSR) lie on the Cytoplasmic side of the membrane.

It belongs to the DsbB family.

Its subcellular location is the cell inner membrane. Its function is as follows. Required for disulfide bond formation in some periplasmic proteins. Acts by oxidizing the DsbA protein. The polypeptide is Disulfide bond formation protein B (Vibrio cholerae serotype O1 (strain ATCC 39315 / El Tor Inaba N16961)).